A 305-amino-acid polypeptide reads, in one-letter code: Methionyl-tRNA formyltransferase (305 aa).

Residue Ser-111–Pro-114 coordinates (6S)-5,6,7,8-tetrahydrofolate.

This sequence belongs to the Fmt family.

The catalysed reaction is L-methionyl-tRNA(fMet) + (6R)-10-formyltetrahydrofolate = N-formyl-L-methionyl-tRNA(fMet) + (6S)-5,6,7,8-tetrahydrofolate + H(+). Functionally, attaches a formyl group to the free amino group of methionyl-tRNA(fMet). The formyl group appears to play a dual role in the initiator identity of N-formylmethionyl-tRNA by promoting its recognition by IF2 and preventing the misappropriation of this tRNA by the elongation apparatus. This chain is Methionyl-tRNA formyltransferase, found in Campylobacter jejuni subsp. doylei (strain ATCC BAA-1458 / RM4099 / 269.97).